The sequence spans 292 residues: Putative phosphatase MPN_381 (292 aa).

Residue Asp-11 is the Nucleophile of the active site. Mg(2+) is bound at residue Asp-11. Leu-12 is a phosphate binding site. Residue Asp-13 participates in Mg(2+) binding. Phosphate-binding positions include 60-61 and Lys-217; that span reads TG. Asp-242 serves as a coordination point for Mg(2+). Residue Asn-245 participates in phosphate binding.

Belongs to the HAD-like hydrolase superfamily. Cof family. It depends on Mg(2+) as a cofactor.

The polypeptide is Putative phosphatase MPN_381 (Mycoplasma pneumoniae (strain ATCC 29342 / M129 / Subtype 1) (Mycoplasmoides pneumoniae)).